A 407-amino-acid chain; its full sequence is Probable tRNA sulfurtransferase (407 aa).

A THUMP domain is found at 61–165 (NEITYRLSKI…LDAIYMYEEV (105 aa)). ATP-binding positions include 183–184 (ML), 208–209 (HF), arginine 265, glycine 287, and glutamine 296.

Belongs to the ThiI family.

It is found in the cytoplasm. The catalysed reaction is [ThiI sulfur-carrier protein]-S-sulfanyl-L-cysteine + a uridine in tRNA + 2 reduced [2Fe-2S]-[ferredoxin] + ATP + H(+) = [ThiI sulfur-carrier protein]-L-cysteine + a 4-thiouridine in tRNA + 2 oxidized [2Fe-2S]-[ferredoxin] + AMP + diphosphate. The enzyme catalyses [ThiS sulfur-carrier protein]-C-terminal Gly-Gly-AMP + S-sulfanyl-L-cysteinyl-[cysteine desulfurase] + AH2 = [ThiS sulfur-carrier protein]-C-terminal-Gly-aminoethanethioate + L-cysteinyl-[cysteine desulfurase] + A + AMP + 2 H(+). Its pathway is cofactor biosynthesis; thiamine diphosphate biosynthesis. Catalyzes the ATP-dependent transfer of a sulfur to tRNA to produce 4-thiouridine in position 8 of tRNAs, which functions as a near-UV photosensor. Also catalyzes the transfer of sulfur to the sulfur carrier protein ThiS, forming ThiS-thiocarboxylate. This is a step in the synthesis of thiazole, in the thiamine biosynthesis pathway. The sulfur is donated as persulfide by IscS. The protein is Probable tRNA sulfurtransferase of Staphylococcus aureus (strain NCTC 8325 / PS 47).